An 861-amino-acid chain; its full sequence is Major vault protein (861 aa).

A2 carries the post-translational modification N-acetylalanine. 9 MVP repeats span residues 2–56 (ATEE…VPPR), 57–111 (HYCI…DITP), 112–164 (LQVV…EIIQ), 165–217 (ATVI…DLVD), 218–272 (AVIL…GVVP), 273–323 (ITTL…IQDV), 324–379 (YVLS…ERQA), 380–457 (IPLD…KTRV), and 458–520 (VSYR…LLGP). Position 421 is a phosphoserine (S421). K444 is covalently cross-linked (Glycyl lysine isopeptide (Lys-Gly) (interchain with G-Cter in SUMO2)). A Glycyl lysine isopeptide (Lys-Gly) (interchain with G-Cter in SUMO2) cross-link involves residue K704.

In terms of assembly, the vault ribonucleoprotein particle is a huge (400 A x 670 A) cage structure of 12.9 MDa. It consists of a dimer of half-vaults, with each half-vault comprising 39 identical major vault protein (MVP) chains, PARP4 and one or more vault RNAs (vRNAs). Interacts with PTEN and activated MAPK1. The phosphorylated protein interacts with the SH2 domains of PTPN11 and SRC. Interacts with APEX1. May interact with ZNF540. Interacts with TEP1. In terms of processing, phosphorylated on Tyr residues after EGF stimulation. Dephosphorylated by PTPN11.

It localises to the cytoplasm. The protein resides in the nucleus. Functionally, required for normal vault structure. Vaults are multi-subunit structures that may act as scaffolds for proteins involved in signal transduction. Vaults may also play a role in nucleo-cytoplasmic transport. Down-regulates IFNG-mediated STAT1 signaling and subsequent activation of JAK. Down-regulates SRC activity and signaling through MAP kinases. This chain is Major vault protein (Mvp), found in Mus musculus (Mouse).